We begin with the raw amino-acid sequence, 1093 residues long: Error-prone DNA polymerase (1093 aa).

The disordered stretch occupies residues 1–55 (MGWFNGPPSWAEMERVLDSKPRRAGESAAPEPDGPLSRGRATYRPPDEGRAARSS). The segment covering 12-25 (EMERVLDSKPRRAG) has biased composition (basic and acidic residues).

It belongs to the DNA polymerase type-C family. DnaE2 subfamily.

The protein localises to the cytoplasm. It catalyses the reaction DNA(n) + a 2'-deoxyribonucleoside 5'-triphosphate = DNA(n+1) + diphosphate. Functionally, DNA polymerase involved in damage-induced mutagenesis and translesion synthesis (TLS). It is not the major replicative DNA polymerase. The sequence is that of Error-prone DNA polymerase from Mycolicibacterium paratuberculosis (strain ATCC BAA-968 / K-10) (Mycobacterium paratuberculosis).